Here is a 527-residue protein sequence, read N- to C-terminus: Glutamate--cysteine ligase (527 aa).

Belongs to the glutamate--cysteine ligase type 1 family. Type 1 subfamily.

It carries out the reaction L-cysteine + L-glutamate + ATP = gamma-L-glutamyl-L-cysteine + ADP + phosphate + H(+). The protein operates within sulfur metabolism; glutathione biosynthesis; glutathione from L-cysteine and L-glutamate: step 1/2. The polypeptide is Glutamate--cysteine ligase (Bordetella parapertussis (strain 12822 / ATCC BAA-587 / NCTC 13253)).